Reading from the N-terminus, the 432-residue chain is Glutamate-1-semialdehyde 2,1-aminomutase 1 (432 aa).

Position 268 is an N6-(pyridoxal phosphate)lysine (lysine 268).

Belongs to the class-III pyridoxal-phosphate-dependent aminotransferase family. HemL subfamily. Homodimer. Pyridoxal 5'-phosphate is required as a cofactor.

The protein resides in the cytoplasm. The catalysed reaction is (S)-4-amino-5-oxopentanoate = 5-aminolevulinate. Its pathway is porphyrin-containing compound metabolism; protoporphyrin-IX biosynthesis; 5-aminolevulinate from L-glutamyl-tRNA(Glu): step 2/2. This is Glutamate-1-semialdehyde 2,1-aminomutase 1 from Bacillus cereus (strain B4264).